We begin with the raw amino-acid sequence, 105 residues long: Insulin-like peptide 7 (105 aa).

The N-terminal stretch at 1 to 18 (MPPIILVFFLVLIPASQQ) is a signal peptide. A propeptide spanning residues 19-57 (YPFSLESLNDQIINEEVIEYMLENSIRSSRTRRVPDEKK) is cleaved from the precursor. 4 disulfides stabilise this stretch: Cys-61-Cys-90, Cys-73-Cys-103, Cys-77-Cys-104, and Cys-89-Cys-94.

This sequence belongs to the insulin family.

It is found in the secreted. Functionally, insulin-like peptide which plays a role in ageing as a consequence of daf-16 activity. The polypeptide is Insulin-like peptide 7 (Caenorhabditis elegans).